The sequence spans 941 residues: Bifunctional uridylyltransferase/uridylyl-removing enzyme (941 aa).

The tract at residues 1–372 (MAKHDLSDAT…RFAHRPRRIP (372 aa)) is uridylyltransferase. Residues 373–728 (GTPEFIEDRG…VRTHSFHAIT (356 aa)) are uridylyl-removing. The 123-residue stretch at 489-611 (VDEHLIRSVG…VQSLDRLRML (123 aa)) folds into the HD domain. ACT domains lie at 729–810 (EITV…EVIA) and 840–919 (VIEI…LREQ). The tract at residues 916–941 (LREQMPSGIIAPAATKSPAAEKKARV) is disordered.

The protein belongs to the GlnD family. It depends on Mg(2+) as a cofactor.

It catalyses the reaction [protein-PII]-L-tyrosine + UTP = [protein-PII]-uridylyl-L-tyrosine + diphosphate. It carries out the reaction [protein-PII]-uridylyl-L-tyrosine + H2O = [protein-PII]-L-tyrosine + UMP + H(+). Uridylyltransferase (UTase) activity is inhibited by glutamine, while glutamine activates uridylyl-removing (UR) activity. Modifies, by uridylylation and deuridylylation, the PII regulatory proteins (GlnB and homologs), in response to the nitrogen status of the cell that GlnD senses through the glutamine level. Under low glutamine levels, catalyzes the conversion of the PII proteins and UTP to PII-UMP and PPi, while under higher glutamine levels, GlnD hydrolyzes PII-UMP to PII and UMP (deuridylylation). Thus, controls uridylylation state and activity of the PII proteins, and plays an important role in the regulation of nitrogen assimilation and metabolism. This is Bifunctional uridylyltransferase/uridylyl-removing enzyme from Allorhizobium ampelinum (strain ATCC BAA-846 / DSM 112012 / S4) (Agrobacterium vitis (strain S4)).